We begin with the raw amino-acid sequence, 218 residues long: Elongation factor Ts (218 aa).

The segment at 82 to 85 is involved in Mg(2+) ion dislocation from EF-Tu; that stretch reads TDFV.

It belongs to the EF-Ts family.

Its subcellular location is the cytoplasm. Its function is as follows. Associates with the EF-Tu.GDP complex and induces the exchange of GDP to GTP. It remains bound to the aminoacyl-tRNA.EF-Tu.GTP complex up to the GTP hydrolysis stage on the ribosome. The sequence is that of Elongation factor Ts (tsf) from Synechocystis sp. (strain ATCC 27184 / PCC 6803 / Kazusa).